The chain runs to 527 residues: GMP synthase [glutamine-hydrolyzing] (527 aa).

The Glutamine amidotransferase type-1 domain maps to 4–202; it reads KILILDFGSQ…VLQICGARAD (199 aa). Catalysis depends on Cys-81, which acts as the Nucleophile. Catalysis depends on residues His-176 and Glu-178. The GMPS ATP-PPase domain occupies 203 to 395; the sequence is WEMGNYIDEA…LGLPPAMVYR (193 aa). 230–236 lines the ATP pocket; sequence SGGVDSS.

Homodimer.

The catalysed reaction is XMP + L-glutamine + ATP + H2O = GMP + L-glutamate + AMP + diphosphate + 2 H(+). Its pathway is purine metabolism; GMP biosynthesis; GMP from XMP (L-Gln route): step 1/1. In terms of biological role, catalyzes the synthesis of GMP from XMP. This is GMP synthase [glutamine-hydrolyzing] from Paraburkholderia phytofirmans (strain DSM 17436 / LMG 22146 / PsJN) (Burkholderia phytofirmans).